A 501-amino-acid polypeptide reads, in one-letter code: 1-aminocyclopropane-1-carboxylate synthase-like protein 1 (501 aa).

E105 contacts substrate. N6-(pyridoxal phosphate)lysine is present on K323. The interval 480 to 501 is disordered; the sequence is GKSQVAEDPRPSQSQEPSDQRR. Over residues 490-501 the composition is skewed to polar residues; it reads PSQSQEPSDQRR.

Belongs to the class-I pyridoxal-phosphate-dependent aminotransferase family.

In terms of biological role, does not catalyze the synthesis of 1-aminocyclopropane-1-carboxylate but is capable of catalyzing the deamination of L-vinylglycine. The protein is 1-aminocyclopropane-1-carboxylate synthase-like protein 1 (ACCS) of Homo sapiens (Human).